The following is a 156-amino-acid chain: Small ribosomal subunit protein uS7 (156 aa).

Belongs to the universal ribosomal protein uS7 family. In terms of assembly, part of the 30S ribosomal subunit. Contacts proteins S9 and S11.

In terms of biological role, one of the primary rRNA binding proteins, it binds directly to 16S rRNA where it nucleates assembly of the head domain of the 30S subunit. Is located at the subunit interface close to the decoding center, probably blocks exit of the E-site tRNA. The polypeptide is Small ribosomal subunit protein uS7 (Gemmatimonas aurantiaca (strain DSM 14586 / JCM 11422 / NBRC 100505 / T-27)).